Consider the following 269-residue polypeptide: Sushi domain-containing protein 3 (269 aa).

A disordered region spans residues 1-23 (MRRTSATLRGRARPRWRAGNTTP). Topologically, residues 1–103 (MRRTSATLRG…VPPHETFGFK (103 aa)) are extracellular. One can recognise a Sushi domain in the interval 30–93 (GTCAQLHPPP…WSSGSPVCKA (64 aa)). 2 disulfides stabilise this stretch: Cys-32–Cys-75 and Cys-61–Cys-91. A helical membrane pass occupies residues 104 to 124 (VAVIASIVSCAIILLMSMAFL). Over 125 to 269 (TCCLLKCVQK…PGRPKVYLPG (145 aa)) the chain is Cytoplasmic. Residues 171-237 (NNSSSVGGGN…RMGTPGPGGC (67 aa)) are disordered. Residues 176-190 (VGGGNGGPSGGGGKP) show a composition bias toward gly residues.

The protein resides in the cell membrane. The sequence is that of Sushi domain-containing protein 3 (Susd3) from Mus musculus (Mouse).